The primary structure comprises 87 residues: MSIKGVVLSYRRSKENQHNNVMIIKPLDVNSREEASKLIGRLVLWKSPSGKILKGKIVRVHGTKGAVRARFEKGLPGQALGDYVEIV.

Belongs to the eukaryotic ribosomal protein eL33 family.

In Pyrococcus woesei, this protein is Large ribosomal subunit protein eL33.